Consider the following 505-residue polypeptide: Putative thymidine phosphorylase (505 aa).

Belongs to the thymidine/pyrimidine-nucleoside phosphorylase family. Type 2 subfamily.

The catalysed reaction is thymidine + phosphate = 2-deoxy-alpha-D-ribose 1-phosphate + thymine. This is Putative thymidine phosphorylase from Hahella chejuensis (strain KCTC 2396).